We begin with the raw amino-acid sequence, 176 residues long: Large ribosomal subunit protein uL16 (176 aa).

This sequence belongs to the universal ribosomal protein uL16 family.

The sequence is that of Large ribosomal subunit protein uL16 from Thermoplasma volcanium (strain ATCC 51530 / DSM 4299 / JCM 9571 / NBRC 15438 / GSS1).